A 647-amino-acid polypeptide reads, in one-letter code: MAAKSDGRLKMKKSSDVAFTPLQNSDNSGSVQGLAPGLPSGSGAEDTEAAGGGCCPDGGGCSRCCCCCAGSGGSAGSGGSGGGGRGSGAGSAALCLRLGREQRRYSLWDCLWILAAVAVYFADVGTDIWLAVDYYLRGQRWWFGLTLFFVVLGSLSVQVFSFRWFVHDFSTEDSSTTTTSSCQQPGADCKTVVSSGSAAGEGEVRPSTPQRQASNASKSNIAATNSGSNSNGATRTSGKHRSASCSFCIWLLQSLIHILQLGQIWRYLHTIYLGIRSRQSGESGRWRFYWKMVYEYADVSMLHLLATFLESAPQLVLQLCIIVQTHSLQALQGFTAAASLVSLAWALASYQKALRDSRDDKKPISYMAVIIQFCWHFFTIAARVITFALFASVFQLYFGIFIVLHWCIMTFWIVHCETEFCITKWEEIVFDMVVGIIYIFSWFNVKEGRTRCRLFIYYFVILLENTALSALWYLYKAPQIADAFAIPALCVVFSSFLTGVVFMLMYYAFFHPNGPRFGQSPSCACDDPATAFSLPPEVATSTLRSISNNRSVASDRDQKFAERDGCVPVFQVRPTAPPTPSSRPPRIEESVIKIDLFRNRYPAWERHVLDRSLRKAILAFECSPSPPRLQYKDDALIQERLEYETTL.

Positions 1–15 (MAAKSDGRLKMKKSS) are enriched in basic and acidic residues. The segment at 1–44 (MAAKSDGRLKMKKSSDVAFTPLQNSDNSGSVQGLAPGLPSGSGA) is disordered. The segment covering 21–31 (PLQNSDNSGSV) has biased composition (polar residues). The next 2 helical transmembrane spans lie at 112–132 (WILA…WLAV) and 142–162 (WFGL…VFSF). The residue at position 197 (serine 197) is a Phosphoserine. Residues 197–238 (SAAGEGEVRPSTPQRQASNASKSNIAATNSGSNSNGATRTSG) are disordered. The span at 207-236 (STPQRQASNASKSNIAATNSGSNSNGATRT) shows a compositional bias: polar residues. The next 8 helical transmembrane spans lie at 245–265 (CSFC…GQIW), 303–323 (HLLA…CIIV), 328–348 (LQAL…WALA), 362–382 (KPIS…TIAA), 393–415 (VFQL…WIVH), 425–445 (WEEI…WFNV), 454–474 (LFIY…LWYL), and 484–504 (FAIP…VFML).

The protein belongs to the XK family. As to quaternary structure, homodimer; homodimerization takes place upon caspase cleavage. Interacts with the processed C-terminus of XRCC4 (protein XRCC4, C-terminus); interaction promotes the phospholipid scramblase activity. Undergoes proteolytic processing by caspase-3 (CASP3), caspase-6 (CASP6) and caspase-7 (CASP7) to generate the XK-related protein 4, processed form, leading to its activation. In terms of tissue distribution, highly expressed in expressed in the brain; weakly expressed in the spleen, thymus, uterus, blood vessels and fetus.

It localises to the cell membrane. The enzyme catalyses a 1,2-diacyl-sn-glycero-3-phospho-L-serine(in) = a 1,2-diacyl-sn-glycero-3-phospho-L-serine(out). Phospholipid scramblase activity is activated upon caspase cleavage to generate the XK-related protein 4, processed form. Does not act prior the onset of apoptosis. Its activity is regulated as follows. Homodimerizes upon caspase cleavage. Phospholipid scramblase activity is activated following interaction with the processed C-terminus of XRCC4 (protein XRCC4, C-terminus). Phospholipid scramblase that promotes phosphatidylserine exposure on apoptotic cell surface. Phosphatidylserine is a specific marker only present at the surface of apoptotic cells and acts as a specific signal for engulfment. This chain is XK-related protein 4, found in Mus musculus (Mouse).